Reading from the N-terminus, the 431-residue chain is Glutamate-1-semialdehyde 2,1-aminomutase (431 aa).

The residue at position 265 (Lys265) is an N6-(pyridoxal phosphate)lysine.

It belongs to the class-III pyridoxal-phosphate-dependent aminotransferase family. HemL subfamily. Homodimer. Pyridoxal 5'-phosphate is required as a cofactor.

The protein localises to the cytoplasm. It carries out the reaction (S)-4-amino-5-oxopentanoate = 5-aminolevulinate. It participates in porphyrin-containing compound metabolism; protoporphyrin-IX biosynthesis; 5-aminolevulinate from L-glutamyl-tRNA(Glu): step 2/2. This Aliivibrio fischeri (strain MJ11) (Vibrio fischeri) protein is Glutamate-1-semialdehyde 2,1-aminomutase.